We begin with the raw amino-acid sequence, 332 residues long: Protein FAM9A (332 aa).

Residues 1-13 (MEPVGRKRSRKAA) show a composition bias toward basic residues. Disordered regions lie at residues 1–114 (MEPV…EHTG) and 186–293 (QKDD…PTGV). 2 stretches are compositionally biased toward basic and acidic residues: residues 74–91 (GKDP…FTET) and 98–114 (DEHG…EHTG). Over residues 196–217 (AAAAAAEAAAAAEAAAAAAEVI) the composition is skewed to low complexity. Residues 218-275 (VVEDEEEEEKEEEEEKEEEEEEGEEEGGGEEGEEGGGGGEGEETEEEEEEEEEEEEEE) show a composition bias toward acidic residues. Basic and acidic residues predominate over residues 276–285 (QIKAFQEKQK).

The protein belongs to the XLR/SYCP3 family. As to expression, expressed exclusively in testis.

The protein resides in the nucleus. Its subcellular location is the nucleolus. This is Protein FAM9A from Homo sapiens (Human).